Consider the following 323-residue polypeptide: tRNA U34 carboxymethyltransferase (323 aa).

Residues lysine 91, tryptophan 105, lysine 110, glycine 130, 152 to 154, 181 to 182, methionine 196, tyrosine 200, and arginine 315 contribute to the carboxy-S-adenosyl-L-methionine site; these read DPT and IE.

Belongs to the class I-like SAM-binding methyltransferase superfamily. CmoB family. In terms of assembly, homotetramer.

The enzyme catalyses carboxy-S-adenosyl-L-methionine + 5-hydroxyuridine(34) in tRNA = 5-carboxymethoxyuridine(34) in tRNA + S-adenosyl-L-homocysteine + H(+). In terms of biological role, catalyzes carboxymethyl transfer from carboxy-S-adenosyl-L-methionine (Cx-SAM) to 5-hydroxyuridine (ho5U) to form 5-carboxymethoxyuridine (cmo5U) at position 34 in tRNAs. The sequence is that of tRNA U34 carboxymethyltransferase from Salmonella typhi.